Consider the following 158-residue polypeptide: NAD(P)H-quinone oxidoreductase subunit J, chloroplastic (158 aa).

The protein belongs to the complex I 30 kDa subunit family. As to quaternary structure, NDH is composed of at least 16 different subunits, 5 of which are encoded in the nucleus.

Its subcellular location is the plastid. The protein resides in the chloroplast thylakoid membrane. It catalyses the reaction a plastoquinone + NADH + (n+1) H(+)(in) = a plastoquinol + NAD(+) + n H(+)(out). It carries out the reaction a plastoquinone + NADPH + (n+1) H(+)(in) = a plastoquinol + NADP(+) + n H(+)(out). Its function is as follows. NDH shuttles electrons from NAD(P)H:plastoquinone, via FMN and iron-sulfur (Fe-S) centers, to quinones in the photosynthetic chain and possibly in a chloroplast respiratory chain. The immediate electron acceptor for the enzyme in this species is believed to be plastoquinone. Couples the redox reaction to proton translocation, and thus conserves the redox energy in a proton gradient. The chain is NAD(P)H-quinone oxidoreductase subunit J, chloroplastic from Ranunculus macranthus (Large buttercup).